The chain runs to 303 residues: Coenzyme PQQ synthesis protein B (303 aa).

It belongs to the PqqB family.

The protein operates within cofactor biosynthesis; pyrroloquinoline quinone biosynthesis. Its function is as follows. May be involved in the transport of PQQ or its precursor to the periplasm. The chain is Coenzyme PQQ synthesis protein B from Pseudomonas savastanoi pv. phaseolicola (strain 1448A / Race 6) (Pseudomonas syringae pv. phaseolicola (strain 1448A / Race 6)).